The sequence spans 167 residues: S-ribosylhomocysteine lyase (167 aa).

His54, His58, and Cys128 together coordinate Fe cation.

Belongs to the LuxS family. In terms of assembly, homodimer. The cofactor is Fe cation.

The enzyme catalyses S-(5-deoxy-D-ribos-5-yl)-L-homocysteine = (S)-4,5-dihydroxypentane-2,3-dione + L-homocysteine. In terms of biological role, involved in the synthesis of autoinducer 2 (AI-2) which is secreted by bacteria and is used to communicate both the cell density and the metabolic potential of the environment. The regulation of gene expression in response to changes in cell density is called quorum sensing. Catalyzes the transformation of S-ribosylhomocysteine (RHC) to homocysteine (HC) and 4,5-dihydroxy-2,3-pentadione (DPD). The protein is S-ribosylhomocysteine lyase of Haemophilus influenzae (strain PittGG).